Here is a 1182-residue protein sequence, read N- to C-terminus: NACHT, LRR and PYD domains-containing protein 1a (1182 aa).

The interval 1 to 23 (MEESQSKQESSTKVAQHEGQEDV) is disordered. The NACHT domain maps to 133 to 442 (QLVIIEGAAG…EFFAAMSYIL (310 aa)). 139 to 146 (GAAGIGKS) contacts ATP. 3 LRR repeats span residues 634–655 (NLEE…SLCT), 691–711 (SLTE…KMLC), and 720–743 (NLSI…RTLE). The interval 780 to 806 (QQRQQSGDKHMEPLGTEDEFWGPTGPV) is disordered. A ZU5 region spans residues 799–932 (FWGPTGPVTT…HYAVLENPSF (134 aa)). An FIIND domain is found at 799-1082 (FWGPTGPVTT…LRPALPKIAT (284 aa)). Residues 933–1082 (SPMGILLRMI…LRPALPKIAT (150 aa)) are UPA. The CARD domain maps to 1092-1175 (HFMDQHREQL…HLVMDILEKL (84 aa)).

It belongs to the NLRP family. In terms of assembly, interacts (via LRR repeats) with BCL2 and BCL2L1 (via the loop between motifs BH4 and BH3). Interacts with NOD2; this interaction is enhanced in the presence of muramyl dipeptide (MDP) and increases IL1B release. Interacts with EIF2AK2/PKR; this interaction requires EIF2AK2 activity, is accompanied by EIF2AK2 autophosphorylation and promotes inflammasome assembly in response to danger-associated signals. Interacts with MEFV; this interaction targets Nlrp1a to degradation by autophagy, hence preventing excessive IL1B- and IL18-mediated inflammation. Interacts with DPP9; leading to inhibit activation of the inflammasome. DPP9 acts via formation of a ternary complex, composed of a DPP9 homodimer, one full-length Nlrp1a protein, and one cleaved C-terminus of Nlrp1a (NACHT, LRR and PYD domains-containing protein 1a, C-terminus). Interacts with DPP8; leading to inhibit activation of the inflammasome, probably via formation of a ternary complex with DPP8. As to quaternary structure, interacts with the C-terminal part of Nlrp1a (NACHT, LRR and PYD domains-containing protein 1a, C-terminus) in absence of pathogens and other damage-associated signals. Interacts with the N-terminal part of Nlrp1a (NACHT, LRR and PYD domains-containing protein 1a, N-terminus) in absence of pathogens and other damage-associated signals. Homomultimer; forms the Nlrp1a inflammasome polymeric complex, a filament composed of homopolymers of this form in response to pathogens and other damage-associated signals. Interacts (via CARD domain) with CASP1 (via CARD domain); leading to CASP1 activation. In terms of processing, autocatalytically cleaved. Autocatalytic cleavage in FIIND region occurs constitutively, prior to activation signals, and is required for inflammasome activity (IL1B release), possibly by facilitating CASP1 binding. Both N- and C-terminal parts remain associated non-covalently. Ubiquitinated in response to pathogen-associated signals, leading to its degradation by the proteasome and subsequent release of the cleaved C-terminal part of the protein (NACHT, LRR and PYD domains-containing protein 1a, C-terminus), which polymerizes and forms the Nlrp1a inflammasome. As to expression, highly expressed in hematopoietic stem cells and progenitor cells of both myeloid and lymphoid origin. The expression is highly strain-dependent. Not expressed in Balb/cJ animals, but widely expressed in C57BL/6J. Expressed in macrophages resistant to Bacillus anthracis lethal toxin, but not in toxin-sensitive macrophages, except in CAST/EiJ strain.

The protein resides in the cytoplasm. Its subcellular location is the cytosol. The protein localises to the nucleus. It is found in the inflammasome. Nlrp1a inflammasome is activated by pathogens and other damage-associated signals: activation promotes ubiquitination and degradation of the N-terminal part, releasing the cleaved C-terminal part of the protein (NACHT, LRR and PYD domains-containing protein 1a, C-terminus), which polymerizes and forms the Nlrp1a inflammasome. Nlrp1a inflammasome is inhibited by DPP8 and DPP9, which sequester the C-terminal fragment of Nlrp1a (NACHT, LRR and PYD domains-containing protein 1a, C-terminus) in a ternary complex, thereby preventing Nlrp1a oligomerization and activation. Nlrp1a inflammasome is activated by Val-boroPro (Talabostat, PT-100), an inhibitor of dipeptidyl peptidases DPP8 and DPP9. Val-boroPro relieves inhibition of DPP8 and/or DPP9 by promoting disruption of the ternary complex, releasing its C-terminal part from autoinhibition. Acts as the sensor component of the Nlrp1a inflammasome, which mediates inflammasome activation in response to various pathogen-associated signals, leading to subsequent pyroptosis. Inflammasomes are supramolecular complexes that assemble in the cytosol in response to pathogens and other damage-associated signals and play critical roles in innate immunity and inflammation. Acts as a recognition receptor (PRR): recognizes specific pathogens and other damage-associated signals, and mediates the formation of the inflammasome polymeric complex. In response to pathogen-associated signals, the N-terminal part of Nlrp1a is degraded by the proteasome, releasing the cleaved C-terminal part of the protein (NACHT, LRR and PYD domains-containing protein 1a, C-terminus), which polymerizes to initiate the formation of the inflammasome complex: the inflammasome recruits pro-caspase-1 (proCASP1) and promotes caspase-1 (CASP1) activation, which subsequently cleaves and activates inflammatory cytokines IL1B and IL18 and gasdermin-D (GSDMD), leading to pyroptosis. In the absence of GSDMD expression, the Nlrp1a inflammasome is able to recruit and activate CASP8, leading to activation of gasdermin-E (GSDME). Activation of Nlrp1a inflammasome is also required for HMGB1 secretion; the active cytokines and HMGB1 stimulate inflammatory responses. When activated in the bone marrow, induces the pyroptosis of hematopoietic stem cells and progenitor cells of both myeloid and lymphoid lineages, hence allowing the removal of damaged cells, and the release of IL1B, which induces granulopoiesis. Its function is as follows. Constitutes the precursor of the Nlrp1a inflammasome, which mediates autoproteolytic processing within the FIIND domain to generate the N-terminal and C-terminal parts, which are associated non-covalently in absence of pathogens and other damage-associated signals. Functionally, regulatory part that prevents formation of the Nlrp1a inflammasome: in absence of pathogens and other damage-associated signals, interacts with the C-terminal part of Nlrp1a (NACHT, LRR and PYD domains-containing protein 1a, C-terminus), preventing activation of the Nlrp1a inflammasome. In response to pathogen-associated signals, this part is ubiquitinated and degraded by the proteasome, releasing the cleaved C-terminal part of the protein, which polymerizes and forms the Nlrp1a inflammasome. In terms of biological role, constitutes the active part of the Nlrp1a inflammasome. In absence of pathogens and other damage-associated signals, interacts with the N-terminal part of Nlrp1a (NACHT, LRR and PYD domains-containing protein 1a, N-terminus), preventing activation of the Nlrp1a inflammasome. In response to pathogen-associated signals, the N-terminal part of Nlrp1a is degraded by the proteasome, releasing this form, which polymerizes to form the Nlrp1a inflammasome complex: the Nlrp1a inflammasome complex then directly recruits pro-caspase-1 (proCASP1) and promotes caspase-1 (CASP1) activation, leading to gasdermin-D (GSDMD) cleavage and subsequent pyroptosis. The sequence is that of NACHT, LRR and PYD domains-containing protein 1a from Mus musculus (Mouse).